Reading from the N-terminus, the 585-residue chain is Zinc finger protein 496 (585 aa).

Positions 1–41 are disordered; that stretch reads MPTALCPRVLAPKESEEPRKMRSPPGENPSPQGEPPSPESS. Residues 11–20 show a composition bias toward basic and acidic residues; sequence APKESEEPRK. A Glycyl lysine isopeptide (Lys-Gly) (interchain with G-Cter in SUMO2) cross-link involves residue Lys13. Over residues 26–38 the composition is skewed to pro residues; that stretch reads GENPSPQGEPPSP. In terms of domain architecture, SCAN box spans 42–124; the sequence is RRLFRRFRYQ…AAVEALEREP (83 aa). Positions 141–167 are disordered; the sequence is DDGDGPAAPQDLEQERMSAESQSYPDA. Residue Ser182 is modified to Phosphoserine. In terms of domain architecture, KRAB spans 220–294; sequence SPFKDMILCF…DLQDKEIPQA (75 aa). The interval 358 to 397 is disordered; it reads SSSGDEDSQHSPYCTEELRSPPEDLHSVPAHQSNASAEGE. The span at 373–383 shows a compositional bias: basic and acidic residues; sequence EELRSPPEDLH. Residues 387–397 show a composition bias toward polar residues; it reads AHQSNASAEGE. The C2H2-type 1; degenerate zinc finger occupies 405–427; the sequence is YVCPNCGKIFRWRVNFIRHLRSR. 2 consecutive C2H2-type zinc fingers follow at residues 433–455 and 461–483; these read HKCS…LETH and YRCT…RRIH. The segment at 483–506 is disordered; that stretch reads HLQPASQQPMKKSEEEALETEGTG. Residue Lys494 forms a Glycyl lysine isopeptide (Lys-Gly) (interchain with G-Cter in SUMO2) linkage. 2 C2H2-type zinc fingers span residues 520–543 and 551–573; these read FQCG…RHCH and FQCR…ERLH. A Nuclear localization signal motif is present at residues 575-579; the sequence is KRRSK.

The protein belongs to the krueppel C2H2-type zinc-finger protein family. In terms of assembly, interacts (via zinc-fingers) with JARID2. Interacts with NSD1.

The protein localises to the nucleus. In terms of biological role, DNA-binding transcription factor that can both act as an activator and a repressor. This Mus musculus (Mouse) protein is Zinc finger protein 496 (Znf496).